The sequence spans 356 residues: Heat-inducible transcription repressor HrcA (356 aa).

It belongs to the HrcA family.

Negative regulator of class I heat shock genes (grpE-dnaK-dnaJ and groELS operons). Prevents heat-shock induction of these operons. This Bartonella tribocorum (strain CIP 105476 / IBS 506) protein is Heat-inducible transcription repressor HrcA.